A 235-amino-acid chain; its full sequence is Type III pantothenate kinase (235 aa).

Residue 6–13 (DVGNTSLK) coordinates ATP. Residues Tyr79 and 86–89 (GIDR) contribute to the substrate site. The active-site Proton acceptor is Asp88. Asp109 contributes to the K(+) binding site. Residue Thr112 coordinates ATP. Residue Thr164 coordinates substrate.

This sequence belongs to the type III pantothenate kinase family. In terms of assembly, homodimer. Requires NH4(+) as cofactor. K(+) serves as cofactor.

The protein resides in the cytoplasm. It carries out the reaction (R)-pantothenate + ATP = (R)-4'-phosphopantothenate + ADP + H(+). It participates in cofactor biosynthesis; coenzyme A biosynthesis; CoA from (R)-pantothenate: step 1/5. Functionally, catalyzes the phosphorylation of pantothenate (Pan), the first step in CoA biosynthesis. This is Type III pantothenate kinase from Pseudoalteromonas translucida (strain TAC 125).